Consider the following 346-residue polypeptide: NADP-dependent alcohol dehydrogenase C (346 aa).

Zn(2+) is bound by residues C41, H63, C94, C97, C100, C108, and C158.

This sequence belongs to the zinc-containing alcohol dehydrogenase family. Requires Zn(2+) as cofactor.

It catalyses the reaction a primary alcohol + NADP(+) = an aldehyde + NADPH + H(+). The chain is NADP-dependent alcohol dehydrogenase C (adhC) from Mycobacterium bovis (strain ATCC BAA-935 / AF2122/97).